The following is a 129-amino-acid chain: KVYGRCELAAAMKRLGLDNYRGYSLGNWVCAAKFESNFNTHATNRNTDGSTDYGILQINSRWWCNDGRTPGSRNLCNIPCSALLSSDITASVNCAKKIVSDGNGMNAWVAWRNRCKGTDVHAWIRGCRL.

In terms of domain architecture, C-type lysozyme spans 1–129 (KVYGRCELAA…VHAWIRGCRL (129 aa)). 4 disulfides stabilise this stretch: Cys6-Cys127, Cys30-Cys115, Cys64-Cys80, and Cys76-Cys94. Residues Glu35 and Asp52 contribute to the active site.

The protein belongs to the glycosyl hydrolase 22 family. Monomer.

The protein localises to the secreted. The enzyme catalyses Hydrolysis of (1-&gt;4)-beta-linkages between N-acetylmuramic acid and N-acetyl-D-glucosamine residues in a peptidoglycan and between N-acetyl-D-glucosamine residues in chitodextrins.. Functionally, lysozymes have primarily a bacteriolytic function; those in tissues and body fluids are associated with the monocyte-macrophage system and enhance the activity of immunoagents. The chain is Lysozyme C (LYZ) from Lophophorus impejanus (Himalayan monal pheasant).